Consider the following 416-residue polypeptide: N-carbamoyl-L-amino-acid amidohydrolase (416 aa).

Positions 87, 98, 133, and 194 each coordinate a divalent metal cation. An N-carbamoyl-L-alpha-amino acid-binding residues include Gln-197, His-230, Asn-279, Arg-292, and Gly-361. An involved in dimerization region spans residues 213-331 (HCQGLWWLEF…SIEAVGHFDP (119 aa)). His-386 is an a divalent metal cation binding site.

The protein belongs to the peptidase M20 family. As to quaternary structure, homodimer. The cofactor is Mn(2+). It depends on Ni(2+) as a cofactor. Co(2+) serves as cofactor. Requires Fe(2+) as cofactor.

The catalysed reaction is an N-carbamoyl-L-alpha-amino acid + H2O + 2 H(+) = an L-alpha-amino acid + NH4(+) + CO2. It catalyses the reaction N-carbamoyl-L-methionine + H2O + 2 H(+) = L-methionine + NH4(+) + CO2. It carries out the reaction N-acetyl-L-methionine + H2O = L-methionine + acetate. The enzyme catalyses N(alpha)-formyl-L-methionine + H2O = formate + L-methionine. The catalysed reaction is N-carbamoyl-L-alanine + H2O + 2 H(+) = L-alanine + NH4(+) + CO2. It catalyses the reaction N-carbamoyl-L-cysteine + H2O + 2 H(+) = L-cysteine + NH4(+) + CO2. It carries out the reaction N-carbamoyl-L-tryptophan + H2O + 2 H(+) = L-tryptophan + NH4(+) + CO2. The enzyme catalyses N-carbamoyl-L-valine + H2O + 2 H(+) = L-valine + NH4(+) + CO2. The catalysed reaction is N-carbamoyl-L-phenylalanine + H2O + 2 H(+) = L-phenylalanine + NH4(+) + CO2. With respect to regulation, strongly inhibited by Hg(2+), Cu(2+), Zn(2+), Pb(2+) and Fe(3+) ions, and slightly inhibited by Na(+) and K(+) ions. Beta-mercaptoethanol and 5,5'-dithiobis-(2-nitrobenzoic acid)(DTNB) cause 34% and 42% inhibition, respectively. Catalyzes the hydrolysis of both aliphatic and aromatic N-carbamoyl-L-alpha-amino acids to free L-alpha-amino acids. Is strictly L-specific since it is inactive toward N-carbamoyl-D-alpha-amino acids. Is also able to hydrolyze N-formyl-L-methionine and N-acetyl-L-methionine, but not ureidosuccinate or 3-ureidopropanoate. This chain is N-carbamoyl-L-amino-acid amidohydrolase, found in Rhizobium meliloti (Ensifer meliloti).